Here is a 196-residue protein sequence, read N- to C-terminus: Nucleoside triphosphate pyrophosphatase (196 aa).

Catalysis depends on aspartate 73, which acts as the Proton acceptor.

This sequence belongs to the Maf family. A divalent metal cation is required as a cofactor.

Its subcellular location is the cytoplasm. It carries out the reaction a ribonucleoside 5'-triphosphate + H2O = a ribonucleoside 5'-phosphate + diphosphate + H(+). The enzyme catalyses a 2'-deoxyribonucleoside 5'-triphosphate + H2O = a 2'-deoxyribonucleoside 5'-phosphate + diphosphate + H(+). Functionally, nucleoside triphosphate pyrophosphatase. May have a dual role in cell division arrest and in preventing the incorporation of modified nucleotides into cellular nucleic acids. The chain is Nucleoside triphosphate pyrophosphatase from Maricaulis maris (strain MCS10) (Caulobacter maris).